Here is a 1236-residue protein sequence, read N- to C-terminus: DNA-directed RNA polymerase subunit beta (1236 aa).

The interval 1185 to 1236 (IEGSEDYTEPKQPNDNYLEEEENKDKESDYDEDLNFDDLTKGLQLDDFNDEH) is disordered. The span at 1201 to 1220 (YLEEEENKDKESDYDEDLNF) shows a compositional bias: acidic residues.

The protein belongs to the RNA polymerase beta chain family. In terms of assembly, the RNAP catalytic core consists of 2 alpha, 1 beta, 1 beta' and 1 omega subunit. When a sigma factor is associated with the core the holoenzyme is formed, which can initiate transcription.

The catalysed reaction is RNA(n) + a ribonucleoside 5'-triphosphate = RNA(n+1) + diphosphate. Functionally, DNA-dependent RNA polymerase catalyzes the transcription of DNA into RNA using the four ribonucleoside triphosphates as substrates. This is DNA-directed RNA polymerase subunit beta from Clostridium tetani (strain Massachusetts / E88).